The sequence spans 84 residues: Sec-independent protein translocase protein TatA (84 aa).

A helical transmembrane segment spans residues 4–24 (MSPVHWLILAVVLLVVFGGGG). The disordered stretch occupies residues 46–84 (DDESMTATDATQAPGHISPPNQNPGYSQTTSSETHRNQV). Over residues 64–77 (PPNQNPGYSQTTSS) the composition is skewed to polar residues.

Belongs to the TatA/E family. In terms of assembly, the Tat system comprises two distinct complexes: a TatABC complex, containing multiple copies of TatA, TatB and TatC subunits, and a separate TatA complex, containing only TatA subunits. Substrates initially bind to the TatABC complex, which probably triggers association of the separate TatA complex to form the active translocon.

Its subcellular location is the cell inner membrane. Its function is as follows. Part of the twin-arginine translocation (Tat) system that transports large folded proteins containing a characteristic twin-arginine motif in their signal peptide across membranes. TatA could form the protein-conducting channel of the Tat system. The polypeptide is Sec-independent protein translocase protein TatA (Gluconobacter oxydans (strain 621H) (Gluconobacter suboxydans)).